A 235-amino-acid chain; its full sequence is 7-cyano-7-deazaguanine synthase (235 aa).

16 to 26 is an ATP binding site; that stretch reads FSGGQDSTTCL. Cys193, Cys201, Cys204, and Cys207 together coordinate Zn(2+).

Belongs to the QueC family. It depends on Zn(2+) as a cofactor.

The catalysed reaction is 7-carboxy-7-deazaguanine + NH4(+) + ATP = 7-cyano-7-deazaguanine + ADP + phosphate + H2O + H(+). Its pathway is purine metabolism; 7-cyano-7-deazaguanine biosynthesis. Catalyzes the ATP-dependent conversion of 7-carboxy-7-deazaguanine (CDG) to 7-cyano-7-deazaguanine (preQ(0)). The protein is 7-cyano-7-deazaguanine synthase of Actinobacillus succinogenes (strain ATCC 55618 / DSM 22257 / CCUG 43843 / 130Z).